Consider the following 223-residue polypeptide: Deoxyribose-phosphate aldolase (223 aa).

Residue aspartate 91 is the Proton donor/acceptor of the active site. Lysine 153 functions as the Schiff-base intermediate with acetaldehyde in the catalytic mechanism. The Proton donor/acceptor role is filled by lysine 182.

It belongs to the DeoC/FbaB aldolase family. DeoC type 1 subfamily.

It is found in the cytoplasm. The catalysed reaction is 2-deoxy-D-ribose 5-phosphate = D-glyceraldehyde 3-phosphate + acetaldehyde. The protein operates within carbohydrate degradation; 2-deoxy-D-ribose 1-phosphate degradation; D-glyceraldehyde 3-phosphate and acetaldehyde from 2-deoxy-alpha-D-ribose 1-phosphate: step 2/2. In terms of biological role, catalyzes a reversible aldol reaction between acetaldehyde and D-glyceraldehyde 3-phosphate to generate 2-deoxy-D-ribose 5-phosphate. In Streptococcus pyogenes serotype M28 (strain MGAS6180), this protein is Deoxyribose-phosphate aldolase.